The following is a 121-amino-acid chain: Natriuretic peptides B (121 aa).

An N-terminal signal peptide occupies residues 1 to 26; sequence MDLLKVLSQMILFLLFLYLSPLGGHS. The interval 61 to 89 is disordered; that stretch reads LKDQGLTKEHPKRVLRSQGSTLRVQQRPQ. The segment covering 77–89 has biased composition (polar residues); the sequence is SQGSTLRVQQRPQ. A disulfide bridge links Cys-99 with Cys-115.

It belongs to the natriuretic peptide family. The precursor molecule is proteolytically cleaved by the endoprotease Furin to produce brain natriuretic peptide 45. May undergo further proteolytic cleavage by various proteases such as DPP4, MME and possibly FAP, to give rise to a variety of shorter peptides. May be cleaved at Ser-91 by the prolyl endopeptidase FAP (seprase) activity (in vitro). May be degraded by IDE. During IDE degradation, the resulting products initially increase the activation of NPR1 and can also stimulate NPR2 to produce cGMP before the fragments are completely degraded and inactivated by IDE (in vitro). In terms of tissue distribution, expressed abundantly in the ventricle, and in a lesser extent in the atrium (at protein level).

It localises to the secreted. In terms of biological role, cardiac hormone that plays a key role in mediating cardio-renal homeostasis. May also function as a paracrine antifibrotic factor in the heart. Acts by specifically binding and stimulating NPR1 to produce cGMP, which in turn activates effector proteins that drive various biological responses. Likely involved in regulating the extracellular fluid volume and maintaining the fluid-electrolyte balance through natriuresis, diuresis, kaluresis and chloruresis. This Mus musculus (Mouse) protein is Natriuretic peptides B (Nppb).